A 154-amino-acid polypeptide reads, in one-letter code: RxLR effector protein PITG_12737 (154 aa).

Residues 1–16 form the signal peptide; sequence MRVYFILILAVATVSG. The RxLR-dEER motif lies at 42–58; it reads RLLRAELTTDETYPEER.

Belongs to the RxLR effector family.

The protein localises to the secreted. The protein resides in the host nucleus. It localises to the host cytoplasm. In terms of biological role, effector that enhances P.infestans colonization of Nicotiana benthamiana leaves. The protein is RxLR effector protein PITG_12737 of Phytophthora infestans (strain T30-4) (Potato late blight agent).